Reading from the N-terminus, the 380-residue chain is Protein Wnt-5a (380 aa).

Positions 1–40 (MRKNLWTFQFGGEASGLVGSAMVSQHFVVLLMSLYCLTQS) are cleaved as a signal peptide. An intrachain disulfide couples cysteine 104 to cysteine 115. N-linked (GlcNAc...) asparagine glycans are attached at residues asparagine 114 and asparagine 120. 10 cysteine pairs are disulfide-bonded: cysteine 154/cysteine 162, cysteine 164/cysteine 182, cysteine 238/cysteine 252, cysteine 240/cysteine 247, cysteine 309/cysteine 340, cysteine 325/cysteine 335, cysteine 339/cysteine 379, cysteine 355/cysteine 370, cysteine 357/cysteine 367, and cysteine 362/cysteine 363. Residue serine 244 is the site of O-palmitoleoyl serine; by PORCN attachment. N-linked (GlcNAc...) asparagine glycans are attached at residues asparagine 312 and asparagine 326.

This sequence belongs to the Wnt family. In terms of processing, palmitoleoylation is required for efficient binding to frizzled receptors. Depalmitoleoylation leads to Wnt signaling pathway inhibition. Found primarily in ectoderm with lower levels of expression in mesoderm. Detected in the head and tail with lower expression in the middle of the embryo. No expression was found in the notochord.

It is found in the secreted. The protein resides in the extracellular space. It localises to the extracellular matrix. Functionally, ligand for members of the frizzled family of seven transmembrane receptors. Can activate or inhibit canonical Wnt signaling, depending on receptor context. Plays a role in normal embryonic development. In Xenopus laevis (African clawed frog), this protein is Protein Wnt-5a (wnt5a).